The sequence spans 189 residues: Crossover junction endodeoxyribonuclease RuvC (189 aa).

Active-site residues include D9, E70, and D143. Positions 9, 70, and 143 each coordinate Mg(2+). Residues M162–W178 show a composition bias toward low complexity. Residues M162 to R189 form a disordered region. Residues A179–R189 show a composition bias toward basic and acidic residues.

Belongs to the RuvC family. As to quaternary structure, homodimer which binds Holliday junction (HJ) DNA. The HJ becomes 2-fold symmetrical on binding to RuvC with unstacked arms; it has a different conformation from HJ DNA in complex with RuvA. In the full resolvosome a probable DNA-RuvA(4)-RuvB(12)-RuvC(2) complex forms which resolves the HJ. It depends on Mg(2+) as a cofactor.

The protein resides in the cytoplasm. The catalysed reaction is Endonucleolytic cleavage at a junction such as a reciprocal single-stranded crossover between two homologous DNA duplexes (Holliday junction).. The RuvA-RuvB-RuvC complex processes Holliday junction (HJ) DNA during genetic recombination and DNA repair. Endonuclease that resolves HJ intermediates. Cleaves cruciform DNA by making single-stranded nicks across the HJ at symmetrical positions within the homologous arms, yielding a 5'-phosphate and a 3'-hydroxyl group; requires a central core of homology in the junction. The consensus cleavage sequence is 5'-(A/T)TT(C/G)-3'. Cleavage occurs on the 3'-side of the TT dinucleotide at the point of strand exchange. HJ branch migration catalyzed by RuvA-RuvB allows RuvC to scan DNA until it finds its consensus sequence, where it cleaves and resolves the cruciform DNA. This chain is Crossover junction endodeoxyribonuclease RuvC, found in Paenarthrobacter aurescens (strain TC1).